We begin with the raw amino-acid sequence, 236 residues long: Snake venom serine protease ussurin (236 aa).

The Peptidase S1 domain occupies Val-1–Ser-227. Cys-28 and Cys-44 are joined by a disulfide. Active-site charge relay system residues include His-43 and Asp-88. Asn-99 and Asn-100 each carry an N-linked (GlcNAc...) asparagine glycan. Intrachain disulfides connect Cys-120–Cys-188, Cys-152–Cys-167, and Cys-178–Cys-203. Residue Ser-182 is the Charge relay system of the active site.

It belongs to the peptidase S1 family. Snake venom subfamily. As to quaternary structure, monomer. Expressed by the venom gland.

The protein resides in the secreted. Its function is as follows. Snake venom serine protease that may act in the hemostasis system of the prey. In Gloydius ussuriensis (Ussuri mamushi), this protein is Snake venom serine protease ussurin.